The following is a 128-amino-acid chain: Large ribosomal subunit protein eL22 (128 aa).

At Thr62 the chain carries Phosphothreonine. Ser66 is subject to Phosphoserine. Lys69 is subject to N6-succinyllysine.

It belongs to the eukaryotic ribosomal protein eL22 family. As to quaternary structure, component of the large ribosomal subunit.

The protein localises to the cytoplasm. Functionally, component of the large ribosomal subunit. The ribosome is a large ribonucleoprotein complex responsible for the synthesis of proteins in the cell. This is Large ribosomal subunit protein eL22 (RPL22) from Oryctolagus cuniculus (Rabbit).